A 987-amino-acid chain; its full sequence is Rho GTPase-activating protein 6 (987 aa).

The segment covering 1 to 21 has biased composition (polar residues); sequence MSAQSLLHSVFSCSSPASGGT. 3 disordered regions span residues 1–60, 76–117, and 144–170; these read MSAQ…RGST, SRLA…SGSF, and GSGSASSRSPASILSSSGGGPNGIFSS. Phosphoserine is present on serine 37. The segment covering 44–57 has biased composition (gly residues); it reads GGCGSEMGAEGGLR. Positions 100 to 115 are enriched in polar residues; the sequence is SSFSTPSTPQEKSPSG. Positions 144-159 are enriched in low complexity; sequence GSGSASSRSPASILSS. Serine 265 bears the Phosphoserine mark. The tract at residues 324–363 is disordered; sequence KQNKELSSSNSSLSSTSETPNESTSPNTPEPAPRARRRGA. A compositionally biased stretch (low complexity) spans 328 to 350; that stretch reads ELSSSNSSLSSTSETPNESTSPN. Residues 344 to 354 carry the SH3-binding motif; it reads NESTSPNTPEP. The residue at position 365 (serine 365) is a Phosphoserine. In terms of domain architecture, Rho-GAP spans 403–604; that stretch reads LSLNPIYRQV…KMIENYEALF (202 aa). The disordered stretch occupies residues 641–676; sequence DILQTEVSFSMGGRHSSTDSNKASSGDISPYDNNSP. The span at 658 to 676 shows a compositional bias: polar residues; it reads TDSNKASSGDISPYDNNSP. Phosphoserine occurs at positions 669, 675, 682, 713, 758, 776, 781, 790, and 824. Residues 709–731 form a disordered region; that stretch reads GHLSSPKSKSRESSPGPRLGKEM. Disordered stretches follow at residues 825–847 and 863–953; these read TPHIQDGSRGTRRPAASSDPFLS and WLQS…QDKQ. Over residues 939-948 the composition is skewed to low complexity; it reads LSSAYSLSAS. Serine 941 and serine 944 each carry phosphoserine.

As to expression, expressed in retina and lung.

It localises to the cytoplasm. GTPase activator for the Rho-type GTPases by converting them to an inactive GDP-bound state. Could regulate the interactions of signaling molecules with the actin cytoskeleton. Promotes continuous elongation of cytoplasmic processes during cell motility and simultaneous retraction of the cell body changing the cell morphology. The protein is Rho GTPase-activating protein 6 (Arhgap6) of Mus musculus (Mouse).